A 134-amino-acid polypeptide reads, in one-letter code: uncharacterized protein (134 aa).

It localises to the cell membrane. May have a role in the regulation of NDH-1 biosynthesis. This is an uncharacterized protein from Paracoccus denitrificans.